The sequence spans 149 residues: Nucleoside diphosphate kinase (149 aa).

ATP is bound by residues K9, F57, R85, T91, R102, and N112. Residue H115 is the Pros-phosphohistidine intermediate of the active site.

The protein belongs to the NDK family. In terms of assembly, homotetramer. The cofactor is Mg(2+).

It localises to the cytoplasm. The catalysed reaction is a 2'-deoxyribonucleoside 5'-diphosphate + ATP = a 2'-deoxyribonucleoside 5'-triphosphate + ADP. The enzyme catalyses a ribonucleoside 5'-diphosphate + ATP = a ribonucleoside 5'-triphosphate + ADP. Its function is as follows. Major role in the synthesis of nucleoside triphosphates other than ATP. The ATP gamma phosphate is transferred to the NDP beta phosphate via a ping-pong mechanism, using a phosphorylated active-site intermediate. This Trichodesmium erythraeum (strain IMS101) protein is Nucleoside diphosphate kinase.